Consider the following 115-residue polypeptide: Na(+)/H(+) antiporter subunit C1 (115 aa).

The next 3 membrane-spanning stretches (helical) occupy residues 1–21, 28–48, and 72–92; these read MEIL…YLIL, IIIG…TMGG, and LILT…VLAF.

The protein belongs to the CPA3 antiporters (TC 2.A.63) subunit C family. May form a heterooligomeric complex that consists of seven subunits: mnhA1, mnhB1, mnhC1, mnhD1, mnhE1, mnhF1 and mnhG1.

The protein localises to the cell membrane. Functionally, mnh complex is a Na(+)/H(+) antiporter involved in Na(+) excretion. The chain is Na(+)/H(+) antiporter subunit C1 (mnhC1) from Staphylococcus saprophyticus subsp. saprophyticus (strain ATCC 15305 / DSM 20229 / NCIMB 8711 / NCTC 7292 / S-41).